The sequence spans 168 residues: NADH-quinone oxidoreductase subunit B (168 aa).

The [4Fe-4S] cluster site is built by Cys-49, Cys-50, Cys-114, and Cys-144.

The protein belongs to the complex I 20 kDa subunit family. In terms of assembly, NDH-1 is composed of 14 different subunits. Subunits NuoB, C, D, E, F, and G constitute the peripheral sector of the complex. Requires [4Fe-4S] cluster as cofactor.

It is found in the cell membrane. It carries out the reaction a quinone + NADH + 5 H(+)(in) = a quinol + NAD(+) + 4 H(+)(out). Functionally, NDH-1 shuttles electrons from NADH, via FMN and iron-sulfur (Fe-S) centers, to quinones in the respiratory chain. Couples the redox reaction to proton translocation (for every two electrons transferred, four hydrogen ions are translocated across the cytoplasmic membrane), and thus conserves the redox energy in a proton gradient. The polypeptide is NADH-quinone oxidoreductase subunit B (Wolbachia sp. subsp. Brugia malayi (strain TRS)).